The sequence spans 331 residues: Ribosomal RNA small subunit methyltransferase H (331 aa).

S-adenosyl-L-methionine-binding positions include 39–41, D56, F83, D100, and Q107; that span reads GGY.

Belongs to the methyltransferase superfamily. RsmH family.

The protein localises to the cytoplasm. The catalysed reaction is cytidine(1402) in 16S rRNA + S-adenosyl-L-methionine = N(4)-methylcytidine(1402) in 16S rRNA + S-adenosyl-L-homocysteine + H(+). Specifically methylates the N4 position of cytidine in position 1402 (C1402) of 16S rRNA. This chain is Ribosomal RNA small subunit methyltransferase H, found in Bartonella bacilliformis (strain ATCC 35685 / KC583 / Herrer 020/F12,63).